A 388-amino-acid polypeptide reads, in one-letter code: Ribonuclease D (388 aa).

Residues I7–L173 enclose the 3'-5' exonuclease domain. One can recognise an HRDC domain in the interval K212–E293.

It belongs to the RNase D family. The cofactor is a divalent metal cation.

The protein resides in the cytoplasm. The catalysed reaction is Exonucleolytic cleavage that removes extra residues from the 3'-terminus of tRNA to produce 5'-mononucleotides.. Functionally, exonuclease involved in the 3' processing of various precursor tRNAs. Initiates hydrolysis at the 3'-terminus of an RNA molecule and releases 5'-mononucleotides. The sequence is that of Ribonuclease D from Sphingobium indicum (strain DSM 16413 / CCM 7287 / MTCC 6362 / UT26 / NBRC 101211 / UT26S) (Sphingobium japonicum).